Consider the following 389-residue polypeptide: Sulfate adenylyltransferase (389 aa).

It belongs to the sulfate adenylyltransferase family.

It catalyses the reaction sulfate + ATP + H(+) = adenosine 5'-phosphosulfate + diphosphate. Its pathway is sulfur metabolism; hydrogen sulfide biosynthesis; sulfite from sulfate: step 1/3. This chain is Sulfate adenylyltransferase, found in Deinococcus geothermalis (strain DSM 11300 / CIP 105573 / AG-3a).